Consider the following 160-residue polypeptide: Crossover junction endodeoxyribonuclease RuvC (160 aa).

Catalysis depends on residues D7, E67, and D138. 3 residues coordinate Mg(2+): D7, E67, and D138.

The protein belongs to the RuvC family. In terms of assembly, homodimer which binds Holliday junction (HJ) DNA. The HJ becomes 2-fold symmetrical on binding to RuvC with unstacked arms; it has a different conformation from HJ DNA in complex with RuvA. In the full resolvosome a probable DNA-RuvA(4)-RuvB(12)-RuvC(2) complex forms which resolves the HJ. It depends on Mg(2+) as a cofactor.

It is found in the cytoplasm. The catalysed reaction is Endonucleolytic cleavage at a junction such as a reciprocal single-stranded crossover between two homologous DNA duplexes (Holliday junction).. The RuvA-RuvB-RuvC complex processes Holliday junction (HJ) DNA during genetic recombination and DNA repair. Endonuclease that resolves HJ intermediates. Cleaves cruciform DNA by making single-stranded nicks across the HJ at symmetrical positions within the homologous arms, yielding a 5'-phosphate and a 3'-hydroxyl group; requires a central core of homology in the junction. The consensus cleavage sequence is 5'-(A/T)TT(C/G)-3'. Cleavage occurs on the 3'-side of the TT dinucleotide at the point of strand exchange. HJ branch migration catalyzed by RuvA-RuvB allows RuvC to scan DNA until it finds its consensus sequence, where it cleaves and resolves the cruciform DNA. The sequence is that of Crossover junction endodeoxyribonuclease RuvC from Brachyspira hyodysenteriae (strain ATCC 49526 / WA1).